The primary structure comprises 557 residues: Dihydroxy-acid dehydratase (557 aa).

Cys-49 contacts [2Fe-2S] cluster. Asp-81 lines the Mg(2+) pocket. Cys-122 is a binding site for [2Fe-2S] cluster. Asp-123 and Lys-124 together coordinate Mg(2+). Lys-124 carries the N6-carboxylysine modification. Residue Cys-194 coordinates [2Fe-2S] cluster. Residue Glu-446 coordinates Mg(2+). The active-site Proton acceptor is Ser-472.

This sequence belongs to the IlvD/Edd family. In terms of assembly, homodimer. [2Fe-2S] cluster serves as cofactor. Requires Mg(2+) as cofactor.

It carries out the reaction (2R)-2,3-dihydroxy-3-methylbutanoate = 3-methyl-2-oxobutanoate + H2O. The catalysed reaction is (2R,3R)-2,3-dihydroxy-3-methylpentanoate = (S)-3-methyl-2-oxopentanoate + H2O. It functions in the pathway amino-acid biosynthesis; L-isoleucine biosynthesis; L-isoleucine from 2-oxobutanoate: step 3/4. It participates in amino-acid biosynthesis; L-valine biosynthesis; L-valine from pyruvate: step 3/4. Functions in the biosynthesis of branched-chain amino acids. Catalyzes the dehydration of (2R,3R)-2,3-dihydroxy-3-methylpentanoate (2,3-dihydroxy-3-methylvalerate) into 2-oxo-3-methylpentanoate (2-oxo-3-methylvalerate) and of (2R)-2,3-dihydroxy-3-methylbutanoate (2,3-dihydroxyisovalerate) into 2-oxo-3-methylbutanoate (2-oxoisovalerate), the penultimate precursor to L-isoleucine and L-valine, respectively. This chain is Dihydroxy-acid dehydratase, found in Prochlorococcus marinus (strain AS9601).